A 222-amino-acid polypeptide reads, in one-letter code: Triosephosphate isomerase (222 aa).

A substrate-binding site is contributed by 10-12; sequence NCK. Catalysis depends on histidine 93, which acts as the Electrophile. The active-site Proton acceptor is the glutamate 141. Substrate contacts are provided by residues isoleucine 146, glycine 180, and 201–202; that span reads AS.

The protein belongs to the triosephosphate isomerase family. In terms of assembly, homotetramer; dimer of dimers.

It is found in the cytoplasm. The enzyme catalyses D-glyceraldehyde 3-phosphate = dihydroxyacetone phosphate. It functions in the pathway carbohydrate biosynthesis; gluconeogenesis. It participates in carbohydrate degradation; glycolysis; D-glyceraldehyde 3-phosphate from glycerone phosphate: step 1/1. Involved in the gluconeogenesis. Catalyzes stereospecifically the conversion of dihydroxyacetone phosphate (DHAP) to D-glyceraldehyde-3-phosphate (G3P). This chain is Triosephosphate isomerase, found in Cenarchaeum symbiosum (strain A).